A 338-amino-acid chain; its full sequence is Phenylalanine--tRNA ligase alpha subunit (338 aa).

Glutamate 253 provides a ligand contact to Mg(2+).

The protein belongs to the class-II aminoacyl-tRNA synthetase family. Phe-tRNA synthetase alpha subunit type 1 subfamily. Tetramer of two alpha and two beta subunits. Mg(2+) serves as cofactor.

The protein localises to the cytoplasm. The enzyme catalyses tRNA(Phe) + L-phenylalanine + ATP = L-phenylalanyl-tRNA(Phe) + AMP + diphosphate + H(+). The chain is Phenylalanine--tRNA ligase alpha subunit from Geobacter sp. (strain M21).